Reading from the N-terminus, the 181-residue chain is ATP synthase subunit delta (181 aa).

The protein belongs to the ATPase delta chain family. F-type ATPases have 2 components, F(1) - the catalytic core - and F(0) - the membrane proton channel. F(1) has five subunits: alpha(3), beta(3), gamma(1), delta(1), epsilon(1). F(0) has three main subunits: a(1), b(2) and c(10-14). The alpha and beta chains form an alternating ring which encloses part of the gamma chain. F(1) is attached to F(0) by a central stalk formed by the gamma and epsilon chains, while a peripheral stalk is formed by the delta and b chains.

The protein localises to the cell inner membrane. F(1)F(0) ATP synthase produces ATP from ADP in the presence of a proton or sodium gradient. F-type ATPases consist of two structural domains, F(1) containing the extramembraneous catalytic core and F(0) containing the membrane proton channel, linked together by a central stalk and a peripheral stalk. During catalysis, ATP synthesis in the catalytic domain of F(1) is coupled via a rotary mechanism of the central stalk subunits to proton translocation. Functionally, this protein is part of the stalk that links CF(0) to CF(1). It either transmits conformational changes from CF(0) to CF(1) or is implicated in proton conduction. The sequence is that of ATP synthase subunit delta from Chlorobium luteolum (strain DSM 273 / BCRC 81028 / 2530) (Pelodictyon luteolum).